The chain runs to 57 residues: COP9 signalosome complex subunit 9 (57 aa).

Thr-26 is subject to Phosphothreonine.

The protein belongs to the CSN9 family. As to quaternary structure, component of the CSN complex, composed of COPS1/GPS1, COPS2, COPS3, COPS4, COPS5, COPS6, COPS7 (COPS7A or COPS7B), COPS8 and COPS9. In the complex, it interacts directly with COPS3, COPS5 and COPS6.

It localises to the nucleus. The protein localises to the cytoplasm. It is found in the nucleoplasm. In terms of biological role, component of the COP9 signalosome complex (CSN), a complex involved in various cellular and developmental processes. The CSN complex is an essential regulator of the ubiquitin (Ubl) conjugation pathway by mediating the deneddylation of the cullin subunits of SCF-type E3 ligase complexes, leading to decrease the Ubl ligase activity of SCF-type complexes such as SCF, CSA or DDB2. The complex is also involved in phosphorylation of p53/TP53, c-jun/JUN, IkappaBalpha/NFKBIA, ITPK1 and IRF8/ICSBP, possibly via its association with CK2 and PKD kinases. CSN-dependent phosphorylation of TP53 and JUN promotes and protects degradation by the Ubl system, respectively. Plays a role in cell proliferation. In Bos taurus (Bovine), this protein is COP9 signalosome complex subunit 9.